The sequence spans 208 residues: Ubiquitin-conjugating enzyme E2 S (208 aa).

A UBC core domain is found at 14–160; the sequence is QTIRQVMREL…ARMMTEIHAQ (147 aa). Residue cysteine 98 is the Glycyl thioester intermediate of the active site. A disordered region spans residues 159-208; it reads AQPAKCASTTSDAKDDDGPSTKKHAGLDKKLQDKKKEKLLKEKKRMLKRL. Over residues 170 to 198 the composition is skewed to basic and acidic residues; it reads DAKDDDGPSTKKHAGLDKKLQDKKKEKLL. The span at 199-208 shows a compositional bias: basic residues; sequence KEKKRMLKRL.

Belongs to the ubiquitin-conjugating enzyme family.

The enzyme catalyses S-ubiquitinyl-[E1 ubiquitin-activating enzyme]-L-cysteine + [E2 ubiquitin-conjugating enzyme]-L-cysteine = [E1 ubiquitin-activating enzyme]-L-cysteine + S-ubiquitinyl-[E2 ubiquitin-conjugating enzyme]-L-cysteine.. The protein operates within protein modification; protein ubiquitination. Catalyzes the covalent attachment of ubiquitin to other proteins. Acts as an essential factor of the anaphase promoting complex/cyclosome (APC/C), a cell cycle-regulated ubiquitin ligase that controls progression through mitosis. Acts by specifically elongating polyubiquitin chains initiated by the E2 enzyme vih/UbcH10 on APC/C substrates, enhancing the degradation of APC/C substrates by the proteasome and promoting mitotic exit. The protein is Ubiquitin-conjugating enzyme E2 S of Drosophila willistoni (Fruit fly).